We begin with the raw amino-acid sequence, 254 residues long: Large ribosomal subunit protein uL2 (254 aa).

This sequence belongs to the universal ribosomal protein uL2 family.

The polypeptide is Large ribosomal subunit protein uL2 (RPL2) (Candida glabrata (strain ATCC 2001 / BCRC 20586 / JCM 3761 / NBRC 0622 / NRRL Y-65 / CBS 138) (Yeast)).